The sequence spans 252 residues: Triosephosphate isomerase (252 aa).

Residue 9 to 11 participates in substrate binding; it reads NWK. Catalysis depends on H96, which acts as the Electrophile. Residue E168 is the Proton acceptor of the active site. Residues G174, S214, and 235–236 contribute to the substrate site; that span reads GG.

Belongs to the triosephosphate isomerase family. Homodimer.

Its subcellular location is the cytoplasm. It catalyses the reaction D-glyceraldehyde 3-phosphate = dihydroxyacetone phosphate. It functions in the pathway carbohydrate biosynthesis; gluconeogenesis. The protein operates within carbohydrate degradation; glycolysis; D-glyceraldehyde 3-phosphate from glycerone phosphate: step 1/1. Its function is as follows. Involved in the gluconeogenesis. Catalyzes stereospecifically the conversion of dihydroxyacetone phosphate (DHAP) to D-glyceraldehyde-3-phosphate (G3P). This chain is Triosephosphate isomerase, found in Chloroherpeton thalassium (strain ATCC 35110 / GB-78).